The chain runs to 198 residues: 3-isopropylmalate dehydratase small subunit (198 aa).

Belongs to the LeuD family. LeuD type 1 subfamily. In terms of assembly, heterodimer of LeuC and LeuD.

It catalyses the reaction (2R,3S)-3-isopropylmalate = (2S)-2-isopropylmalate. The protein operates within amino-acid biosynthesis; L-leucine biosynthesis; L-leucine from 3-methyl-2-oxobutanoate: step 2/4. Functionally, catalyzes the isomerization between 2-isopropylmalate and 3-isopropylmalate, via the formation of 2-isopropylmaleate. This Colwellia psychrerythraea (strain 34H / ATCC BAA-681) (Vibrio psychroerythus) protein is 3-isopropylmalate dehydratase small subunit.